The chain runs to 140 residues: Putative pre-16S rRNA nuclease (140 aa).

The protein belongs to the YqgF nuclease family.

The protein localises to the cytoplasm. Functionally, could be a nuclease involved in processing of the 5'-end of pre-16S rRNA. In Vibrio vulnificus (strain YJ016), this protein is Putative pre-16S rRNA nuclease.